Consider the following 224-residue polypeptide: Casparian strip membrane protein 3 (224 aa).

Residues 1-30 (MESKKEGVASAPTSPESRRTRSNGKGKTIA) form a disordered region. Over 1 to 57 (MESKKEGVASAPTSPESRRTRSNGKGKTIAEATPPSVTVVSTKVTPSPRGGWRKGAA) the chain is Cytoplasmic. Residues 58-78 (ILDFILRLGAISSAIGAAAVM) traverse the membrane as a helical segment. Over 79–105 (GNNEQILPFFTQFFQFHVQWDDFPMFQ) the chain is Extracellular. The helical transmembrane segment at 106-126 (FFVFANGAAVVFLILSLPFSI) threads the bilayer. Residues 127-138 (VCIVRPFAVGPR) are Cytoplasmic-facing. The helical transmembrane segment at 139–159 (LLLVIVDIFAMALVIAAASAA) threads the bilayer. At 160–191 (AAVVYLAHNGSQDANWIAICQQYTDFCQVTSQ) the chain is on the extracellular side. A glycan (N-linked (GlcNAc...) asparagine) is linked at Asn168. Residues 192 to 212 (AVVASFVAAVFLICLIVLSSV) form a helical membrane-spanning segment. The Cytoplasmic portion of the chain corresponds to 213 to 224 (ALKKGLKREFGW).

It belongs to the Casparian strip membrane proteins (CASP) family. Homodimer and heterodimers.

The protein localises to the cell membrane. Functionally, regulates membrane-cell wall junctions and localized cell wall deposition. Required for establishment of the Casparian strip membrane domain (CSD) and the subsequent formation of Casparian strips, a cell wall modification of the root endodermis that determines an apoplastic barrier between the intraorganismal apoplasm and the extraorganismal apoplasm and prevents lateral diffusion. The polypeptide is Casparian strip membrane protein 3 (Vigna unguiculata (Cowpea)).